A 313-amino-acid polypeptide reads, in one-letter code: MNQLFGSDKLRLPQRAQAGIAFVRYLIARMNHDRINVNAGYLAYITLLSIVPMLTVLLSILSKFSVFENVGSVLQSFIINNFVPASGDAVHAALQEFIANTGKMTAVGAAFLFVAALMLISNIDKNLNYIWRVKKKRRAVFSFSMYWMVLTLGPILVGASIAATSYITSLRLLDSEAISTVYDQLLRWLPFILSSSAFVGLYLLVPNKKVQFSHAVVGAMIAAVLFELSKKGFAAYITQFPSYQLIYGALAAIPILFVWVYLCWLIVLIGAEVTAALGEREHWRPAEDVIQSLPNNDTELEKDTQRDRFDSES.

6 consecutive transmembrane segments (helical) span residues 41 to 61 (YLAY…LSIL), 104 to 124 (MTAV…SNID), 139 to 159 (AVFS…LVGA), 185 to 205 (LLRW…YLLV), 215 to 235 (AVVG…GFAA), and 249 to 269 (ALAA…IVLI). The segment at 294 to 313 (PNNDTELEKDTQRDRFDSES) is disordered. Residues 299–313 (ELEKDTQRDRFDSES) are compositionally biased toward basic and acidic residues.

This sequence belongs to the UPF0761 family.

The protein resides in the cell inner membrane. In Vibrio vulnificus (strain CMCP6), this protein is UPF0761 membrane protein VV1_0885.